The sequence spans 285 residues: Flagellar filament 30.7 kDa core protein (285 aa).

This sequence belongs to the bacterial flagellin family. The core of the flagellum consists of several antigenically related polypeptides. Post-translationally, glycosylated. Glycosylation is not essential for motility.

The protein localises to the periplasmic flagellum. Its subcellular location is the periplasm. Component of the core of the flagella. The sequence is that of Flagellar filament 30.7 kDa core protein (flaB3) from Treponema maltophilum.